Consider the following 472-residue polypeptide: Flap endonuclease 1 (472 aa).

Residues 1–106 (MGIKGLARFL…EELMKRKERR (106 aa)) form an N-domain region. Aspartate 34 contacts Mg(2+). Arginine 47 and arginine 72 together coordinate DNA. Aspartate 88, glutamate 160, glutamate 162, aspartate 181, and aspartate 183 together coordinate Mg(2+). An I-domain region spans residues 124–263 (TIRKQLIRTI…LTAYKLLKKH (140 aa)). Glutamate 160 contributes to the DNA binding site. DNA-binding residues include glycine 241 and aspartate 243. Aspartate 243 contributes to the Mg(2+) binding site. The tract at residues 348–356 (AQTSLDSFF) is interaction with PCNA.

The protein belongs to the XPG/RAD2 endonuclease family. FEN1 subfamily. As to quaternary structure, interacts with PCNA. Three molecules of FEN1 bind to one PCNA trimer with each molecule binding to one PCNA monomer. PCNA stimulates the nuclease activity without altering cleavage specificity. Mg(2+) is required as a cofactor. In terms of processing, phosphorylated. Phosphorylation upon DNA damage induces relocalization to the nuclear plasma.

It is found in the nucleus. It localises to the nucleolus. The protein localises to the nucleoplasm. The protein resides in the mitochondrion. Its function is as follows. Structure-specific nuclease with 5'-flap endonuclease and 5'-3' exonuclease activities involved in DNA replication and repair. During DNA replication, cleaves the 5'-overhanging flap structure that is generated by displacement synthesis when DNA polymerase encounters the 5'-end of a downstream Okazaki fragment. It enters the flap from the 5'-end and then tracks to cleave the flap base, leaving a nick for ligation. Also involved in the long patch base excision repair (LP-BER) pathway, by cleaving within the apurinic/apyrimidinic (AP) site-terminated flap. Acts as a genome stabilization factor that prevents flaps from equilibrating into structures that lead to duplications and deletions. Also possesses 5'-3' exonuclease activity on nicked or gapped double-stranded DNA, and exhibits RNase H activity. Also involved in replication and repair of rDNA and in repairing mitochondrial DNA. The protein is Flap endonuclease 1 of Cryptosporidium muris (strain RN66).